The primary structure comprises 346 residues: Uroporphyrinogen decarboxylase (346 aa).

Substrate is bound by residues 26-30 (RQAGR), Asp-76, Tyr-153, Ser-208, and His-323.

The protein belongs to the uroporphyrinogen decarboxylase family. Homodimer.

Its subcellular location is the cytoplasm. The enzyme catalyses uroporphyrinogen III + 4 H(+) = coproporphyrinogen III + 4 CO2. The protein operates within porphyrin-containing compound metabolism; protoporphyrin-IX biosynthesis; coproporphyrinogen-III from 5-aminolevulinate: step 4/4. Its function is as follows. Catalyzes the decarboxylation of four acetate groups of uroporphyrinogen-III to yield coproporphyrinogen-III. The protein is Uroporphyrinogen decarboxylase of Prochlorococcus marinus (strain MIT 9515).